We begin with the raw amino-acid sequence, 97 residues long: Coiled-coil domain-containing protein 167 (97 aa).

Residues 2-78 are a coiled coil; the sequence is TKKKRENLGV…LLRHENRKNT (77 aa). Residues 78–95 form a helical membrane-spanning segment; it reads TLLSVAIFTVFALLYAYW.

It localises to the membrane. This is Coiled-coil domain-containing protein 167 (Ccdc167) from Mus musculus (Mouse).